The chain runs to 511 residues: Maturase K (511 aa).

This sequence belongs to the intron maturase 2 family. MatK subfamily.

It is found in the plastid. The protein resides in the chloroplast. In terms of biological role, usually encoded in the trnK tRNA gene intron. Probably assists in splicing its own and other chloroplast group II introns. The polypeptide is Maturase K (Hordeum vulgare (Barley)).